Consider the following 276-residue polypeptide: Large ribosomal subunit protein uL2 (276 aa).

The segment at 223–276 (GVAMNPVDHPHGGGEGRGKGHHPTSPWGLPTKGYKTRRGKRPSDKFIVRRRNEA) is disordered. Basic and acidic residues-rich tracts occupy residues 230–240 (DHPHGGGEGRG) and 263–276 (RPSDKFIVRRRNEA).

Belongs to the universal ribosomal protein uL2 family. Part of the 50S ribosomal subunit. Forms a bridge to the 30S subunit in the 70S ribosome.

One of the primary rRNA binding proteins. Required for association of the 30S and 50S subunits to form the 70S ribosome, for tRNA binding and peptide bond formation. It has been suggested to have peptidyltransferase activity; this is somewhat controversial. Makes several contacts with the 16S rRNA in the 70S ribosome. This Thermotoga petrophila (strain ATCC BAA-488 / DSM 13995 / JCM 10881 / RKU-1) protein is Large ribosomal subunit protein uL2.